Reading from the N-terminus, the 199-residue chain is Prolactin-1 (199 aa).

Cystine bridges form between cysteine 4–cysteine 11, cysteine 58–cysteine 174, and cysteine 191–cysteine 199. A glycan (N-linked (GlcNAc...) asparagine) is linked at asparagine 60.

The protein belongs to the somatotropin/prolactin family. In terms of processing, glycosylated.

It localises to the secreted. In Crocodylus novaeguineae (Crocodile), this protein is Prolactin-1.